We begin with the raw amino-acid sequence, 335 residues long: N-acetyl-gamma-glutamyl-phosphate reductase (335 aa).

Residue Cys156 is part of the active site.

Belongs to the NAGSA dehydrogenase family. Type 1 subfamily.

The protein localises to the cytoplasm. It catalyses the reaction N-acetyl-L-glutamate 5-semialdehyde + phosphate + NADP(+) = N-acetyl-L-glutamyl 5-phosphate + NADPH + H(+). It participates in amino-acid biosynthesis; L-arginine biosynthesis; N(2)-acetyl-L-ornithine from L-glutamate: step 3/4. Catalyzes the NADPH-dependent reduction of N-acetyl-5-glutamyl phosphate to yield N-acetyl-L-glutamate 5-semialdehyde. In Aeromonas hydrophila subsp. hydrophila (strain ATCC 7966 / DSM 30187 / BCRC 13018 / CCUG 14551 / JCM 1027 / KCTC 2358 / NCIMB 9240 / NCTC 8049), this protein is N-acetyl-gamma-glutamyl-phosphate reductase.